The sequence spans 527 residues: Baicalin-beta-D-glucuronidase (527 aa).

Positions 1 to 25 (MGFQVWQKGLCVLCFSLIFICGVIG) are cleaved as a signal peptide. The active-site Proton donor is E212. E329 functions as the Nucleophile in the catalytic mechanism.

This sequence belongs to the glycosyl hydrolase 79 family. As to quaternary structure, homotetramer.

It catalyses the reaction baicalin + H2O = baicalein + D-glucuronate + H(+). Its function is as follows. Beta-glucuronidase involved in the initiation of H(2)O(2) metabolism via the production of baicalein. Unable to use glycyrrhizin, gypsogenin-3-O-D-glucuronide, luteolin-7-O-D-glucoside and apigenin-7-O-D-glucoside as substrates. In Scutellaria baicalensis (Baical skullcap), this protein is Baicalin-beta-D-glucuronidase (SGUS).